We begin with the raw amino-acid sequence, 183 residues long: Translation initiation factor IF-3 (183 aa).

The protein belongs to the IF-3 family. As to quaternary structure, monomer.

It is found in the cytoplasm. In terms of biological role, IF-3 binds to the 30S ribosomal subunit and shifts the equilibrium between 70S ribosomes and their 50S and 30S subunits in favor of the free subunits, thus enhancing the availability of 30S subunits on which protein synthesis initiation begins. The protein is Translation initiation factor IF-3 of Vibrio cholerae serotype O1 (strain ATCC 39315 / El Tor Inaba N16961).